Reading from the N-terminus, the 185-residue chain is Ribosome-recycling factor (185 aa).

The protein belongs to the RRF family.

The protein localises to the cytoplasm. Functionally, responsible for the release of ribosomes from messenger RNA at the termination of protein biosynthesis. May increase the efficiency of translation by recycling ribosomes from one round of translation to another. The protein is Ribosome-recycling factor of Haemophilus influenzae (strain 86-028NP).